The chain runs to 277 residues: MSTLPIRTVFFISDGTGITAETLGHSLLAQFPEARIRQVRAPFIDDLDKAIDCANQIREAARNDGVRPIVFSTLVSPETVEALHKADALFLDLFDRFIGPLETELGQRSTHTVGRFHGIADSLDYKNRIEAINFAMAHDDGVSSDGELAEADVILVGVSRSGKTPTSLYLAMQFGVKAANYPLIPEDFERNKLPGELHNYRGKLFGLTIAPERLSQIRQERRPNSRYASLDNCKYEIDAAQKLMRRENIRWLDSTTKSIEEISATILQSVRLNRPGY.

Residue 157-164 (GVSRSGKT) coordinates ADP.

The protein belongs to the pyruvate, phosphate/water dikinase regulatory protein family. PSRP subfamily.

The enzyme catalyses [pyruvate, water dikinase] + ADP = [pyruvate, water dikinase]-phosphate + AMP + H(+). It catalyses the reaction [pyruvate, water dikinase]-phosphate + phosphate + H(+) = [pyruvate, water dikinase] + diphosphate. Its function is as follows. Bifunctional serine/threonine kinase and phosphorylase involved in the regulation of the phosphoenolpyruvate synthase (PEPS) by catalyzing its phosphorylation/dephosphorylation. This chain is Putative phosphoenolpyruvate synthase regulatory protein, found in Azoarcus sp. (strain BH72).